The chain runs to 416 residues: Cyclin-L1-1 (416 aa).

The disordered stretch occupies residues 286–416 (KCTAGSANND…DSSKDRRRHH (131 aa)). Basic and acidic residues-rich tracts occupy residues 304–315 (PHEKATDSKKSG), 328–374 (SYER…DKLK), 384–393 (RLKDSGGHSD), and 401–410 (RDRDYRDSSK).

This sequence belongs to the cyclin family. Cyclin L subfamily. In terms of assembly, forms a complex with CDKG1. Interacts with MOS4 and associates with the spliceosome.

The protein localises to the nucleus. Cognate cyclin for CDKG1. Required for synapsis and male meiosis, and for the proper splicing of specific resistance (R) genes. Involved in regulation of DNA methylation and transcriptional silencing. In Arabidopsis thaliana (Mouse-ear cress), this protein is Cyclin-L1-1 (CYCL1-1).